The primary structure comprises 663 residues: UvrABC system protein B (663 aa).

The Helicase ATP-binding domain maps to 31 to 418 (DNIEGGEKAQ…TDTVVEQIIR (388 aa)). Residue 44–51 (GATGTGKT) coordinates ATP. Positions 97-120 (YYDYYQPEAYVPSSDTYIEKDSSV) match the Beta-hairpin motif. In terms of domain architecture, Helicase C-terminal spans 435-601 (QMDDLLGEIN…TIKKEIRDLI (167 aa)). In terms of domain architecture, UVR spans 627–662 (QAEIKALQQQMQEAAELLDFELAAQIRDVILELKAI).

It belongs to the UvrB family. As to quaternary structure, forms a heterotetramer with UvrA during the search for lesions. Interacts with UvrC in an incision complex.

It is found in the cytoplasm. Functionally, the UvrABC repair system catalyzes the recognition and processing of DNA lesions. A damage recognition complex composed of 2 UvrA and 2 UvrB subunits scans DNA for abnormalities. Upon binding of the UvrA(2)B(2) complex to a putative damaged site, the DNA wraps around one UvrB monomer. DNA wrap is dependent on ATP binding by UvrB and probably causes local melting of the DNA helix, facilitating insertion of UvrB beta-hairpin between the DNA strands. Then UvrB probes one DNA strand for the presence of a lesion. If a lesion is found the UvrA subunits dissociate and the UvrB-DNA preincision complex is formed. This complex is subsequently bound by UvrC and the second UvrB is released. If no lesion is found, the DNA wraps around the other UvrB subunit that will check the other stand for damage. This chain is UvrABC system protein B, found in Streptococcus agalactiae serotype III (strain NEM316).